The sequence spans 651 residues: Cysteine-rich receptor-like protein kinase 42 (651 aa).

A signal peptide spans 1-28; the sequence is MRCLTKTRSFHYVIIFYSFFFLPFLSSS. Residues 29 to 251 lie on the Extracellular side of the membrane; that stretch reads SDDQRTTVSG…HHKFHVLFNK (223 aa). Gnk2-homologous domains lie at 35 to 135 and 137 to 236; these read TVSG…TYEF and DESV…DHKF. N79 and N151 each carry an N-linked (GlcNAc...) asparagine glycan. Residues 252–272 traverse the membrane as a helical segment; sequence GVIVAIVLTTSAFVMLILLAT. The Cytoplasmic segment spans residues 273 to 651; it reads YVIMTKVSKT…SSESSTTRTI (379 aa). Residues 315 to 604 form the Protein kinase domain; the sequence is FSHKKMLGQG…IPSPTSPPFL (290 aa). ATP is bound by residues 321–329 and K343; that span reads LGQGGNGTV. At Y388 the chain carries Phosphotyrosine. D440 functions as the Proton acceptor in the catalytic mechanism. 2 positions are modified to phosphoserine: S444 and S473. Residues T474 and T479 each carry the phosphothreonine modification. Residue Y487 is modified to Phosphotyrosine.

This sequence belongs to the protein kinase superfamily. Ser/Thr protein kinase family. CRK subfamily.

The protein resides in the membrane. The catalysed reaction is L-seryl-[protein] + ATP = O-phospho-L-seryl-[protein] + ADP + H(+). It carries out the reaction L-threonyl-[protein] + ATP = O-phospho-L-threonyl-[protein] + ADP + H(+). The protein is Cysteine-rich receptor-like protein kinase 42 (CRK42) of Arabidopsis thaliana (Mouse-ear cress).